A 137-amino-acid chain; its full sequence is Protein yippee-like F37A8.5 (137 aa).

The disordered stretch occupies residues 1 to 20; it reads MHFRMKVLENSSKHNTPKKQ. The region spanning 32–129 is the Yippee domain; that stretch reads RCYSCIHCRA…IELAHMVKDN (98 aa). 4 residues coordinate Zn(2+): Cys36, Cys39, Cys92, and Cys95.

It belongs to the yippee family.

The polypeptide is Protein yippee-like F37A8.5 (Caenorhabditis elegans).